We begin with the raw amino-acid sequence, 308 residues long: Methionyl-tRNA formyltransferase (308 aa).

109–112 serves as a coordination point for (6S)-5,6,7,8-tetrahydrofolate; sequence SLLP.

The protein belongs to the Fmt family.

It carries out the reaction L-methionyl-tRNA(fMet) + (6R)-10-formyltetrahydrofolate = N-formyl-L-methionyl-tRNA(fMet) + (6S)-5,6,7,8-tetrahydrofolate + H(+). In terms of biological role, attaches a formyl group to the free amino group of methionyl-tRNA(fMet). The formyl group appears to play a dual role in the initiator identity of N-formylmethionyl-tRNA by promoting its recognition by IF2 and preventing the misappropriation of this tRNA by the elongation apparatus. The polypeptide is Methionyl-tRNA formyltransferase (Methylococcus capsulatus (strain ATCC 33009 / NCIMB 11132 / Bath)).